Here is a 283-residue protein sequence, read N- to C-terminus: Aspartate dehydrogenase domain-containing protein (283 aa).

Ser-20 and Ser-168 each carry phosphoserine.

This sequence belongs to the L-aspartate dehydrogenase family.

This chain is Aspartate dehydrogenase domain-containing protein, found in Homo sapiens (Human).